A 369-amino-acid polypeptide reads, in one-letter code: Flagellar P-ring protein (369 aa).

Residues 1–24 (MKTLHRCIGVALLALGALAGTAHA) form the signal peptide.

Belongs to the FlgI family. The basal body constitutes a major portion of the flagellar organelle and consists of four rings (L,P,S, and M) mounted on a central rod.

The protein localises to the periplasm. Its subcellular location is the bacterial flagellum basal body. In terms of biological role, assembles around the rod to form the L-ring and probably protects the motor/basal body from shearing forces during rotation. This Ralstonia nicotianae (strain ATCC BAA-1114 / GMI1000) (Ralstonia solanacearum) protein is Flagellar P-ring protein.